The primary structure comprises 36 residues: Protein YnfP (36 aa).

The sequence is that of Protein YnfP from Escherichia coli (strain K12).